The following is a 499-amino-acid chain: Sensor histidine kinase VxrA (499 aa).

The Cytoplasmic segment spans residues 1-12 (MRYSFCMLEKTN). A helical membrane pass occupies residues 13 to 31 (IPLIRALNLTLVSLCFAML). Over 32–257 (PNPVHADSLP…ICWDVEDHSD (226 aa)) the chain is Periplasmic. 2 disulfides stabilise this stretch: Cys101-Cys122 and Cys241-Cys249. Residues 258–280 (LLRTSMIILVIANIFLVLGWSGY) traverse the membrane as a helical segment. The Cytoplasmic portion of the chain corresponds to 281 to 499 (RWNSKRQEMR…IPCETDTASR (219 aa)). One can recognise a Histidine kinase domain in the interval 298 to 494 (ILTHELRTPI…TFILEIPCET (197 aa)). The residue at position 301 (His301) is a Phosphohistidine; by autocatalysis.

Homodimer. Post-translationally, autophosphorylated. Contains two disulfide bonds that may play a role in the stability of the protein. However, the disulfide bonds are not absolutely essential, as some activity and growth are detected in the absence of each disulfide bond.

The protein resides in the cell inner membrane. The enzyme catalyses ATP + protein L-histidine = ADP + protein N-phospho-L-histidine.. Member of the two-component regulatory system VxrB/VxrA involved in the regulation of diverses processes, including virulence, the type VI secretion system (T6SS) and biofilm formation. Functions as a sensor protein kinase which is autophosphorylated at a histidine residue and transfers its phosphate group to the conserved aspartic acid residue in the regulatory domain of VxrB. Is critical for colonization in the infant mouse model. Contributes to the resistance to beta-lactam treatment. The protein is Sensor histidine kinase VxrA of Vibrio cholerae serotype O1 (strain ATCC 39315 / El Tor Inaba N16961).